The primary structure comprises 216 residues: Somatotropin (216 aa).

An N-terminal signal peptide occupies residues 1 to 26; it reads MAAGPRTSVLLAFALLCLPWTQEVGA. His45 contacts Zn(2+). A disulfide bond links Cys78 and Cys189. Ser131 carries the phosphoserine modification. Glu198 is a Zn(2+) binding site. Cys206 and Cys214 form a disulfide bridge.

It belongs to the somatotropin/prolactin family.

The protein resides in the secreted. Plays an important role in growth control. Its major role in stimulating body growth is to stimulate the liver and other tissues to secrete IGF1. It stimulates both the differentiation and proliferation of myoblasts. It also stimulates amino acid uptake and protein synthesis in muscle and other tissues. The protein is Somatotropin (GH1) of Hippopotamus amphibius (Hippopotamus).